Here is a 107-residue protein sequence, read N- to C-terminus: MTGLDRERIVDGAPALSAEELQAALAGLPGWQLAGDGKSICREWRFKNFKQAAQLANLAAWQAEAAGHHPDIAFGWGHARVSYSTHSAGGVSRNDLIMAARLDAATG.

It belongs to the pterin-4-alpha-carbinolamine dehydratase family.

The catalysed reaction is (4aS,6R)-4a-hydroxy-L-erythro-5,6,7,8-tetrahydrobiopterin = (6R)-L-erythro-6,7-dihydrobiopterin + H2O. The polypeptide is Putative pterin-4-alpha-carbinolamine dehydratase (Paracoccus denitrificans (strain Pd 1222)).